A 113-amino-acid polypeptide reads, in one-letter code: Eukaryotic translation initiation factor 1b (113 aa).

An N-acetylserine modification is found at S2. Phosphoserine is present on S9.

Belongs to the SUI1 family.

Its function is as follows. Probably involved in translation. In Homo sapiens (Human), this protein is Eukaryotic translation initiation factor 1b (EIF1B).